The primary structure comprises 185 residues: Dioxygenase easH (185 aa).

Histidine 17, aspartate 19, and histidine 93 together coordinate Fe cation.

It belongs to the PhyH family. In terms of assembly, homodimer. Fe cation serves as cofactor.

The protein operates within alkaloid biosynthesis; ergot alkaloid biosynthesis. Dioxygenase; part of the gene cluster that mediates the biosynthesis of fungal ergot alkaloid ergovaline, the predominant ergopeptine product in E.festucae var. lolii. DmaW catalyzes the first step of ergot alkaloid biosynthesis by condensing dimethylallyl diphosphate (DMAP) and tryptophan to form 4-dimethylallyl-L-tryptophan. The second step is catalyzed by the methyltransferase easF that methylates 4-dimethylallyl-L-tryptophan in the presence of S-adenosyl-L-methionine, resulting in the formation of 4-dimethylallyl-L-abrine. The catalase easC and the FAD-dependent oxidoreductase easE then transform 4-dimethylallyl-L-abrine to chanoclavine-I which is further oxidized by easD in the presence of NAD(+), resulting in the formation of chanoclavine-I aldehyde. Agroclavine dehydrogenase easG then mediates the conversion of chanoclavine-I aldehyde to agroclavine via a non-enzymatic adduct reaction: the substrate is an iminium intermediate that is formed spontaneously from chanoclavine-I aldehyde in the presence of glutathione. The presence of easA is not required to complete this reaction. Further conversion of agroclavine to paspalic acid is a two-step process involving oxidation of agroclavine to elymoclavine and of elymoclavine to paspalic acid, the second step being performed by the elymoclavine oxidase cloA. Paspalic acid is then further converted to D-lysergic acid. Ergovaline is assembled from D-lysergic acid and three different amino acids by the D-lysergyl-peptide-synthetase composed of a monomudular (lpsB) and a trimodular (lpsA) nonribosomal peptide synthetase subunit. In Epichloe festucae var. lolii (Neotyphodium lolii), this protein is Dioxygenase easH.